The sequence spans 296 residues: Protein-export membrane protein SecF (296 aa).

A run of 6 helical transmembrane segments spans residues 23–43 (MIIY…ANYV), 144–164 (AIVY…RVPV), 169–189 (VVFS…IFGI), 194–214 (ATIA…ILLT), 236–256 (GFTM…FSTA), and 265–285 (VLIF…AGVL).

This sequence belongs to the SecD/SecF family. SecF subfamily. As to quaternary structure, part of the protein translocation apparatus. Forms a complex with SecD.

The protein resides in the cell membrane. Functionally, involved in protein export. The polypeptide is Protein-export membrane protein SecF (Pyrococcus furiosus (strain ATCC 43587 / DSM 3638 / JCM 8422 / Vc1)).